The following is a 360-amino-acid chain: Alpha-ketoglutarate dependent kainoid synthase (360 aa).

The 111-residue stretch at Met200–Pro310 folds into the Fe2OG dioxygenase domain. 3 residues coordinate Fe cation: His225, Asp227, and His286. Arg301 contacts 2-oxoglutarate.

It belongs to the iron/ascorbate-dependent oxidoreductase family. The cofactor is Fe(2+).

The enzyme catalyses prekainate + 2-oxoglutarate + O2 = kainate + succinate + CO2 + H2O. The catalysed reaction is prekainate + 2-oxoglutarate + O2 + H(+) = kainate lactone + succinate + CO2 + H2O. It functions in the pathway secondary metabolite biosynthesis. With respect to regulation, inhibited by the iron chelator EDTA. Iron/ascorbate-dependent oxidoreductase: part of the gene cluster that mediates the biosynthesis of kainic acid (KA) and derivatives, natural products with neurochemical activity acting as ionotropic glutamate receptor (iGluR) agonists, thus being neurotoxins. Catalyzes the conversion of prekainic acid to kainic acid and kainic acid lactone. This Digenea simplex (Marine red alga) protein is Alpha-ketoglutarate dependent kainoid synthase.